The sequence spans 261 residues: 14-3-3 protein 9 (261 aa).

Positions 239-261 (PEDAEDAQKGDATNKAGGGEDAE) are disordered.

This sequence belongs to the 14-3-3 family. In terms of assembly, homodimer.

The sequence is that of 14-3-3 protein 9 (TFT9) from Solanum lycopersicum (Tomato).